Consider the following 207-residue polypeptide: Thymidylate kinase (207 aa).

7–14 (GPEGAGKS) is an ATP binding site.

Belongs to the thymidylate kinase family.

It carries out the reaction dTMP + ATP = dTDP + ADP. Its function is as follows. Phosphorylation of dTMP to form dTDP in both de novo and salvage pathways of dTTP synthesis. This Pseudomonas putida (strain W619) protein is Thymidylate kinase.